We begin with the raw amino-acid sequence, 828 residues long: Periplasmic nitrate reductase (828 aa).

A signal peptide (tat-type signal) is located at residues 1 to 31 (MKLSRRSFMKANAVAAAAAAAGLSVPGVARA). Residues 39-95 (IKWDKAPCRFCGTGCGVLVGTQQGRVVACQGDPDAPVNRGLNCIKGYFLPKIMYGKD) enclose the 4Fe-4S Mo/W bis-MGD-type domain. 4 residues coordinate [4Fe-4S] cluster: cysteine 46, cysteine 49, cysteine 53, and cysteine 81. Mo-bis(molybdopterin guanine dinucleotide) is bound by residues lysine 83, glutamine 150, asparagine 175, cysteine 179, 212 to 219 (WGSNMAEM), 243 to 247 (STFQH), 262 to 264 (QSD), methionine 372, glutamine 376, asparagine 482, 508 to 509 (SD), lysine 531, aspartate 558, and 718 to 727 (TGRVLEHWHT). Phenylalanine 794 serves as a coordination point for substrate. Positions 802 and 819 each coordinate Mo-bis(molybdopterin guanine dinucleotide).

The protein belongs to the prokaryotic molybdopterin-containing oxidoreductase family. NasA/NapA/NarB subfamily. As to quaternary structure, component of the periplasmic nitrate reductase NapAB complex composed of NapA and NapB. [4Fe-4S] cluster serves as cofactor. Mo-bis(molybdopterin guanine dinucleotide) is required as a cofactor. Post-translationally, predicted to be exported by the Tat system. The position of the signal peptide cleavage has not been experimentally proven.

It localises to the periplasm. The catalysed reaction is 2 Fe(II)-[cytochrome] + nitrate + 2 H(+) = 2 Fe(III)-[cytochrome] + nitrite + H2O. Catalytic subunit of the periplasmic nitrate reductase complex NapAB. Receives electrons from NapB and catalyzes the reduction of nitrate to nitrite. The chain is Periplasmic nitrate reductase from Salmonella paratyphi C (strain RKS4594).